The primary structure comprises 476 residues: Protein transport protein Sec61 subunit alpha isoform 2 (476 aa).

Topologically, residues 1–33 (MGIKFLEVIKPFCAVLPEIQKPERKIQFREKVL) are cytoplasmic. A helical transmembrane segment spans residues 34–53 (WTAITLFIFLVCCQIPLFGI). The Lumenal portion of the chain corresponds to 54-76 (MSSDSADPFYWMRVILASNRGTL). A helical membrane pass occupies residues 77-96 (MELGISPIVTSGLIMQLLAG). Topologically, residues 97–117 (AKIIEVGDTPKDRALFNGAQK) are cytoplasmic. A helical membrane pass occupies residues 118–138 (LFGMIITIGQAIVYVMTGMYG). Residues 139–144 (DPAEMG) lie on the Lumenal side of the membrane. Residues 145–165 (AGICLLIIIQLFVAGLIVLLL) traverse the membrane as a helical segment. The Cytoplasmic portion of the chain corresponds to 166 to 172 (DELLQKG). Residues 173 to 193 (YGLGSGISLFIATNICETIVW) traverse the membrane as a helical segment. Residues 194-240 (KAFSPTTINTGRGTEFEGAVIALFHLLATRTDKVRALREAFYRQNLP) lie on the Lumenal side of the membrane. Residues 241–261 (NLMNLIATVFVFAVVIYFQGF) form a helical membrane-spanning segment. At 262 to 288 (RVDLPIKSARYRGQYSSYPIKLFYTSN) the chain is on the cytoplasmic side. Residues 289–309 (IPIILQSALVSNLYVISQMLS) form a helical membrane-spanning segment. Residues 310-354 (VRFSGNFLVNLLGQWADVSGGGPARSYPVGGLCYYLSPPESMGAI) lie on the Lumenal side of the membrane. The chain crosses the membrane as a helical span at residues 355 to 375 (FEDPVHVVVYIIFMLGSCAFF). Residues 376–420 (SKTWIEVSGSSAKDVAKQLKEQQMVMRGHRDTSMVHELNRYIPTA) are Cytoplasmic-facing. Residues 421-441 (AAFGGLCIGALSVLADFLGAI) traverse the membrane as a helical segment. Over 442–445 (GSGT) the chain is Lumenal. Residues 446-462 (GILLAVTIIYQYFEIFV) form a helical membrane-spanning segment. Residues 463 to 476 (KEQAEVGGMGALFF) lie on the Cytoplasmic side of the membrane.

Belongs to the SecY/SEC61-alpha family. The SEC61 channel-forming translocon complex consists of channel-forming core components SEC61A1, SEC61B and SEC61G and different auxiliary components such as SEC62 and SEC63.

The protein localises to the endoplasmic reticulum membrane. Component of SEC61 channel-forming translocon complex that mediates transport of signal peptide-containing precursor polypeptides across the endoplasmic reticulum (ER). Forms a ribosome receptor and a gated pore in the ER membrane, both functions required for cotranslational translocation of nascent polypeptides. The sequence is that of Protein transport protein Sec61 subunit alpha isoform 2 (SEC61A2) from Homo sapiens (Human).